The following is a 102-amino-acid chain: Large ribosomal subunit protein bL21 (102 aa).

The protein belongs to the bacterial ribosomal protein bL21 family. In terms of assembly, part of the 50S ribosomal subunit. Contacts protein L20.

Its function is as follows. This protein binds to 23S rRNA in the presence of protein L20. This chain is Large ribosomal subunit protein bL21, found in Bifidobacterium animalis subsp. lactis (strain AD011).